We begin with the raw amino-acid sequence, 481 residues long: FAD-linked oxidoreductase afoF (481 aa).

A signal peptide spans 1–16; sequence MRFLLQSITLVAAARA. The region spanning 52–227 is the FAD-binding PCMH-type domain; it reads SEWRPPTWTG…TAATFKMFDQ (176 aa). An N-linked (GlcNAc...) asparagine glycan is attached at asparagine 82. Histidine 92 is modified (pros-8alpha-FAD histidine). 6 N-linked (GlcNAc...) asparagine glycosylation sites follow: asparagine 196, asparagine 241, asparagine 276, asparagine 309, asparagine 312, and asparagine 376.

This sequence belongs to the oxygen-dependent FAD-linked oxidoreductase family. Requires FAD as cofactor.

In terms of biological role, FAD-linked oxidoreductase; part of the gene cluster that mediates the biosynthesis of asperfuranone, a probable antitumor agent. The polyketide synthase afoG is responsible for producing the 3,5-dimethyloctadienone moiety from acetyl-CoA, three malonyl-CoA, and two S-adenosyl methionines (SAM). The 3,5-dimethyloctadienone moiety is then loaded onto the SAT domain of afoE and extended with four malonyl-CoA and one SAM, which leads to the formation of 2,4-dihydroxy-6-(5,7-dimethyl-2-oxo-trans-3-trans-5-nonadienyl)-3-methylbenzaldehyde (compound 2) after reductive release and aldol condensation. AfoD is the next enzyme in the biosynthesis sequence and hydroxylates the side chain at the benzylic position of compound 2. After benzylic hydroxylation, a furan ring is formed after five-member ring hemiacetal formation and water elimination. AfoF and afoC are proposed to oxidize the R-diketone proton and to reduce the unconjugated carbonyl group, respectively, to generate asperfuranone. Since no intermediates could be isolated from afoF and afoC deletants, the sequence of these two enzymes is not fully understood. Moreover, since afoC deletant still produces a small amount of asperfuranone, other endogenous oxidoreductases might catalyze the same reaction with much less efficiency. The polypeptide is FAD-linked oxidoreductase afoF (Emericella nidulans (strain FGSC A4 / ATCC 38163 / CBS 112.46 / NRRL 194 / M139) (Aspergillus nidulans)).